The sequence spans 315 residues: Carbamate kinase (315 aa).

The protein belongs to the carbamate kinase family. Homodimer.

The protein localises to the cytoplasm. It catalyses the reaction hydrogencarbonate + NH4(+) + ATP = carbamoyl phosphate + ADP + H2O + H(+). The sequence is that of Carbamate kinase (cpkA) from Thermococcus kodakarensis (strain ATCC BAA-918 / JCM 12380 / KOD1) (Pyrococcus kodakaraensis (strain KOD1)).